The sequence spans 318 residues: Ferredoxin--NADP reductase (318 aa).

Residues Asp-33, Gln-41, Tyr-46, Val-84, Phe-115, Asp-276, and Thr-316 each contribute to the FAD site.

Belongs to the ferredoxin--NADP reductase type 2 family. Homodimer. FAD is required as a cofactor.

The catalysed reaction is 2 reduced [2Fe-2S]-[ferredoxin] + NADP(+) + H(+) = 2 oxidized [2Fe-2S]-[ferredoxin] + NADPH. The chain is Ferredoxin--NADP reductase from Lactobacillus johnsonii (strain CNCM I-12250 / La1 / NCC 533).